Consider the following 153-residue polypeptide: Large ribosomal subunit protein uL23m (153 aa).

A disordered region spans residues 131–153 (MADEQQRQGSDPQRGGVPNWFSL).

The protein belongs to the universal ribosomal protein uL23 family. As to quaternary structure, component of the mitochondrial ribosome large subunit (39S) which comprises a 16S rRNA and about 50 distinct proteins.

It localises to the mitochondrion. The polypeptide is Large ribosomal subunit protein uL23m (MRPL23) (Otolemur garnettii (Small-eared galago)).